The chain runs to 290 residues: Small ribosomal subunit biogenesis GTPase RsgA (290 aa).

Residues 61-218 (KSELVRPTVA…IVDTPGFSTL (158 aa)) enclose the CP-type G domain. Residues 110–113 (NKID) and 161–169 (GPSGAGKST) contribute to the GTP site. Cys-243, Cys-248, His-250, and Cys-256 together coordinate Zn(2+).

The protein belongs to the TRAFAC class YlqF/YawG GTPase family. RsgA subfamily. As to quaternary structure, monomer. Associates with 30S ribosomal subunit, binds 16S rRNA. Zn(2+) serves as cofactor.

The protein localises to the cytoplasm. Functionally, one of several proteins that assist in the late maturation steps of the functional core of the 30S ribosomal subunit. Helps release RbfA from mature subunits. May play a role in the assembly of ribosomal proteins into the subunit. Circularly permuted GTPase that catalyzes slow GTP hydrolysis, GTPase activity is stimulated by the 30S ribosomal subunit. The polypeptide is Small ribosomal subunit biogenesis GTPase RsgA (Clostridium beijerinckii (strain ATCC 51743 / NCIMB 8052) (Clostridium acetobutylicum)).